Reading from the N-terminus, the 116-residue chain is NADH-ubiquinone oxidoreductase chain 3 (116 aa).

The next 3 membrane-spanning stretches (helical) occupy residues 3 to 23, 56 to 76, and 87 to 107; these read LISTVILIASALSLILILVSF, FFLIAILFLLFDLEIALLLPL, and LTFMWATSVLALLTLGLIYEW.

The protein belongs to the complex I subunit 3 family.

It localises to the mitochondrion membrane. It catalyses the reaction a ubiquinone + NADH + 5 H(+)(in) = a ubiquinol + NAD(+) + 4 H(+)(out). In terms of biological role, core subunit of the mitochondrial membrane respiratory chain NADH dehydrogenase (Complex I) that is believed to belong to the minimal assembly required for catalysis. Complex I functions in the transfer of electrons from NADH to the respiratory chain. The immediate electron acceptor for the enzyme is believed to be ubiquinone. In Gadus morhua (Atlantic cod), this protein is NADH-ubiquinone oxidoreductase chain 3 (MT-ND3).